The following is a 118-amino-acid chain: GRB2-related adapter protein-like (118 aa).

The SH3 domain occupies 1–58; that stretch reads MESVALYSFQATESDELAFNKGDTLKILNMEDDQNWYKAELRGVEGFIPKNYIRVKPH. The SH2 domain occupies 60–118; that stretch reads WYSGRISRQLAEEILMKRNHLGAFLIRESESSPGEFSVSVNNRAQRGPCLGPKSHSRLG. The interval 89–118 is disordered; sequence ESSPGEFSVSVNNRAQRGPCLGPKSHSRLG. Residues 90–103 are compositionally biased toward polar residues; that stretch reads SSPGEFSVSVNNRA.

The protein belongs to the GRB2/sem-5/DRK family.

The chain is GRB2-related adapter protein-like (GRAPL) from Homo sapiens (Human).